A 157-amino-acid polypeptide reads, in one-letter code: MQKIGIYPGTFDPVTNGHIDIIHRSSELFEKLIVAVAHSSAKNPMFSLKERLKMMQLATKSFKNVECVAFEGLLANLAKEYHCKVLVRGLRVVSDFEYELQMGYANKSLNHELETLYFMPTLQNAFISSSIVRSIIAHKGDASHLVPKEIYPLISKA.

Threonine 10 serves as a coordination point for substrate. ATP contacts are provided by residues 10 to 11 and histidine 18; that span reads TF. Residues lysine 42, leucine 74, and arginine 88 each contribute to the substrate site. Residues 89 to 91, glutamate 99, and 124 to 130 contribute to the ATP site; these read GLR and NAFISSS.

This sequence belongs to the bacterial CoaD family. As to quaternary structure, homohexamer. Requires Mg(2+) as cofactor.

It is found in the cytoplasm. It catalyses the reaction (R)-4'-phosphopantetheine + ATP + H(+) = 3'-dephospho-CoA + diphosphate. It functions in the pathway cofactor biosynthesis; coenzyme A biosynthesis; CoA from (R)-pantothenate: step 4/5. In terms of biological role, reversibly transfers an adenylyl group from ATP to 4'-phosphopantetheine, yielding dephospho-CoA (dPCoA) and pyrophosphate. The sequence is that of Phosphopantetheine adenylyltransferase from Helicobacter pylori (strain P12).